The following is a 478-amino-acid chain: MFPRETKWNISFAGCGFLGVYHIGVASCLREHAPFLVANATHIYGASAGALTATALVTGACLGEAGANIIEVSKEARKRFLGPLHPSFNLVKTIRGCLLKTLPADCHTRASGRLGISLTRVSDGENVIISHFSSKDELIQANVCSTFIPVYCGLIPPTLQGVRYVDGGISDNLPLYELKNTITVSPFSGESDICPQDSSTNIHELRITNTSIQFNLRNLYRLSKALFPPEPMVLREMCKQGYRDGLRFLRRNGLLNQPNPLLALPPVVPQEEDAEEAAVTEERTGGEDRILEHLPARLNEALLEACVEPKDLMTTLSNMLPVRLATAMMVPYTLPLESAVSFTIRLLEWLPDVPEDIRWMKEQTGSICQYLVMRAKRKLGDHLPSRLSEQVELRRAQSLPSVPLSCATYSEALPNWVRNNLSLGDALAKWEECQRQLLLGLFCTNVAFPPDALRMRAPASPTATDPATPQDPSGLPPC.

Residues 1–8 (MFPRETKW) are Cytoplasmic-facing. A helical membrane pass occupies residues 9–29 (NISFAGCGFLGVYHIGVASCL). The region spanning 10–179 (ISFAGCGFLG…SDNLPLYELK (170 aa)) is the PNPLA domain. The GXGXXG signature appears at 14 to 19 (GCGFLG). Residues 30–42 (REHAPFLVANATH) lie on the Extracellular side of the membrane. An N-linked (GlcNAc...) asparagine glycan is attached at Asn-39. A helical transmembrane segment spans residues 43 to 63 (IYGASAGALTATALVTGACLG). Positions 45-49 (GASAG) match the GXSXG motif. The active-site Nucleophile is Ser-47. Residues 64–137 (EAGANIIEVS…IISHFSSKDE (74 aa)) lie on the Cytoplasmic side of the membrane. Lys-92 is covalently cross-linked (Glycyl lysine isopeptide (Lys-Gly) (interchain with G-Cter in ubiquitin)). Residues 138–158 (LIQANVCSTFIPVYCGLIPPT) form a helical membrane-spanning segment. Over 159 to 323 (LQGVRYVDGG…TTLSNMLPVR (165 aa)) the chain is Extracellular. Catalysis depends on Asp-166, which acts as the Proton acceptor. A DGA/G motif is present at residues 166-168 (DGG). Residues 324–344 (LATAMMVPYTLPLESAVSFTI) traverse the membrane as a helical segment. Over 345–478 (RLLEWLPDVP…PQDPSGLPPC (134 aa)) the chain is Cytoplasmic. Phosphoserine; in vitro is present on Ser-366. Ser-388 is subject to Phosphoserine; by PKA. 2 positions are modified to phosphoserine: Ser-398 and Ser-422. Residues 456–478 (RAPASPTATDPATPQDPSGLPPC) are disordered. Low complexity predominate over residues 457-478 (APASPTATDPATPQDPSGLPPC). Ser-460 bears the Phosphoserine; in vitro mark.

In terms of assembly, interacts with ABHD5; this association stimulates PNPLA2 triglyceride hydrolase activity. Interacts with SERPINF1; this interaction stimulates the phospholipase A2 activity of PNPLA2. Despite a colocalization in lipid droplets, it probably does not interact with PLIN. Interacts with PLIN5; prevents interaction with ABHD5. Interacts with FAF2. In terms of processing, phosphorylation at Ser-398 by PKA is increased during fasting and moderate intensity exercise, and moderately increases lipolytic activity. Ubiquitinated by PEX2 in response to reactive oxygen species (ROS), leading to its degradation. Ubiquitination is stimulated by LDAH.

The protein resides in the lipid droplet. It localises to the cell membrane. It is found in the cytoplasm. It carries out the reaction a triacylglycerol + H2O = a diacylglycerol + a fatty acid + H(+). The enzyme catalyses a triacylglycerol + H2O = a 1,2-diacylglycerol + a fatty acid + H(+). It catalyses the reaction a triacylglycerol + H2O = a 1,3-diacylglycerol + a fatty acid + H(+). The catalysed reaction is a triacyl-sn-glycerol + H2O = a 1,3-diacyl-sn-glycerol + a fatty acid + H(+). It carries out the reaction a triacyl-sn-glycerol + H2O = a 2,3-diacyl-sn-glycerol + a fatty acid + H(+). The enzyme catalyses a 1-acylglycerol + a 1,3-diacylglycerol = a triacylglycerol + glycerol. It catalyses the reaction a 1-acylglycerol + a 1,2-diacylglycerol = a triacylglycerol + glycerol. The catalysed reaction is 2 a 1-acylglycerol = a 1,2-diacylglycerol + glycerol. It carries out the reaction a triacylglycerol + all-trans-retinol = an all-trans-retinyl ester + a diacylglycerol. The enzyme catalyses 1,2-di-(9Z-octadecenoyl)-glycerol + (9Z)-octadecenoate + H(+) = 1,2,3-tri-(9Z-octadecenoyl)-glycerol + H2O. It catalyses the reaction 1,2,3-tri-(9Z-octadecenoyl)-glycerol + H2O = 1,3-di-(9Z-octadecenoyl)-glycerol + (9Z)-octadecenoate + H(+). The catalysed reaction is 1-(9Z-octadecenoyl)-glycerol + 1,3-di-(9Z-octadecenoyl)-glycerol = 1,2,3-tri-(9Z-octadecenoyl)-glycerol + glycerol. It carries out the reaction 1-(9Z-octadecenoyl)-glycerol + 1,2-di-(9Z-octadecenoyl)-glycerol = 1,2,3-tri-(9Z-octadecenoyl)-glycerol + glycerol. The enzyme catalyses 2 1-(9Z-octadecenoyl)-glycerol = 1,2-di-(9Z-octadecenoyl)-glycerol + glycerol. It catalyses the reaction 1,2,3-tri-(9Z-octadecenoyl)-glycerol + all-trans-retinol = all-trans-retinyl 9Z-octadecenoate + di-(9Z)-octadecenoylglycerol. The catalysed reaction is 1,2,3-tri-(9Z)-hexadecenoylglycerol + H2O = 1,3-di-(9Z)-hexadecenoylglycerol + (9Z)-hexadecenoate + H(+). It carries out the reaction 1,2,3-tri-(9Z,12Z)-octadecadienoylglycerol + H2O = 1,3-di-(9Z,12Z)-octadecadienoylglycerol + (9Z,12Z)-octadecadienoate + H(+). The enzyme catalyses 1,2,3-tri-(9Z,12Z,15Z)-octadecatrienoylglycerol + H2O = 1,3-di-(9Z,12Z,15Z)-octadecatrienoylglycerol + (9Z,12Z,15Z)-octadecatrienoate + H(+). It catalyses the reaction 1,3-di-(9Z)-octadecenoyl-2-hexadecanoylglycerol + H2O = 1,3-di-(9Z-octadecenoyl)-glycerol + hexadecanoate + H(+). The catalysed reaction is 1,2-di-(9Z)-octadecenoyl-3-hexadecanoyl-sn-glycerol + H2O = 1-(9Z)-octadecenoyl-3-hexadecanoyl-sn-glycerol + (9Z)-octadecenoate + H(+). It carries out the reaction 1-hexadecanoyl-2,3-di-(9Z)-octadecenoyl-sn-glycerol + H2O = 1-hexadecanoyl-3-(9Z)-octadecenoyl-sn-glycerol + (9Z)-octadecenoate + H(+). The enzyme catalyses 1,2,3-tri-(9Z-octadecenoyl)-glycerol + H2O = 2,3-di-(9Z)-octadecenoyl-sn-glycerol + (9Z)-octadecenoate + H(+). It catalyses the reaction 1,2,3-tri-(9Z)-hexadecenoylglycerol + H2O = 2,3-di-(9Z)-hexadecenoyl-sn-glycerol + (9Z)-hexadecenoate + H(+). The catalysed reaction is 1,2,3-tri-(9Z,12Z)-octadecadienoylglycerol + H2O = 2,3-di-(9Z,12Z)-octadecadienoyl-sn-glycerol + (9Z,12Z)-octadecadienoate + H(+). It carries out the reaction 1,2,3-tri-(9Z,12Z,15Z)-octadecatrienoylglycerol + H2O = 2,3-di-(9Z,12Z,15Z)-octadecatrienoyl-sn-glycerol + (9Z,12Z,15Z)-octadecatrienoate + H(+). The enzyme catalyses 1,3-di-(9Z)-octadecenoyl-2-hexadecanoylglycerol + H2O = 2-hexadecanoyl-3-(9Z)-octadecenoyl-sn-glycerol + (9Z)-octadecenoate + H(+). It catalyses the reaction 1-hexadecanoyl-2,3-di-(9Z)-octadecenoyl-sn-glycerol + H2O = 2,3-di-(9Z)-octadecenoyl-sn-glycerol + hexadecanoate + H(+). The catalysed reaction is 1,2-di-(9Z)-octadecenoyl-3-hexadecanoyl-sn-glycerol + H2O = 2-(9Z-octadecenoyl)-3-hexadecanoyl-sn-glycerol + (9Z)-octadecenoate + H(+). It carries out the reaction a 1,2-diacyl-sn-glycero-3-phosphocholine + H2O = a 1-acyl-sn-glycero-3-phosphocholine + a fatty acid + H(+). The enzyme catalyses 1,2,3-tri-(9Z-octadecenoyl)-glycerol + 9-hydroxy-octadecanoate = 9-(9Z-octadecenoyloxy)-octadecanoate + 2,3-di-(9Z)-octadecenoyl-sn-glycerol. It catalyses the reaction 1-hexadecanoyl-2,3-di-(9Z)-octadecenoyl-sn-glycerol + 9-hydroxy-octadecanoate = 9-hexadecanoyloxy-octadecanoate + 2,3-di-(9Z)-octadecenoyl-sn-glycerol. The catalysed reaction is 1,2,3-tri-(10Z)-heptadecenoylglycerol + 9-hydroxy-octadecanoate = 2,3-di-(10Z-heptadecenoyl)-sn-glycerol + 9-(10Z-heptadecenoyloxy)-octadecanoate. It carries out the reaction 1,2,3-tri-(9Z,12Z)-octadecadienoylglycerol + 9-hydroxy-octadecanoate = 2,3-di-(9Z,12Z)-octadecadienoyl-sn-glycerol + 9-(9Z,12Z-octadecadienoyloxy)-octadecanoate. The enzyme catalyses 1,2,3-tri-(9Z)-hexadecenoylglycerol + 9-hydroxy-octadecanoate = 2,3-di-(9Z)-hexadecenoyl-sn-glycerol + 9-(9Z-hexadecenoyloxy)-octadecanoate. It catalyses the reaction 9-hydroxy-octadecanoate + 1,2-di-(9Z-octadecenoyl)-sn-glycerol = 9-(9Z-octadecenoyloxy)-octadecanoate + 2-(9Z-octadecenoyl)-glycerol. The catalysed reaction is 1-hexadecanoyl-2,3-di-(9Z)-octadecenoyl-sn-glycerol + 9-hydroxy-octadecanoate = 1-hexadecanoyl-3-(9Z)-octadecenoyl-sn-glycerol + 9-(9Z-octadecenoyloxy)-octadecanoate. It functions in the pathway glycerolipid metabolism; triacylglycerol degradation. Catalyzes the initial step in triglyceride hydrolysis in adipocyte and non-adipocyte lipid droplets. Exhibits a strong preference for the hydrolysis of long-chain fatty acid esters at the sn-2 position of the glycerol backbone and acts coordinately with LIPE/HLS and DGAT2 within the lipolytic cascade. Also possesses acylglycerol transacylase and phospholipase A2 activities. Transfers fatty acid from triglyceride to retinol, hydrolyzes retinylesters, and generates 1,3-diacylglycerol from triglycerides. Regulates adiposome size and may be involved in the degradation of adiposomes. Catalyzes the formation of an ester bond between hydroxy fatty acids and fatty acids derived from triglycerides or diglycerides to generate fatty acid esters of hydroxy fatty acids (FAHFAs) in adipocytes. Acts antagonistically with LDAH in regulation of cellular lipid stores. Inhibits LDAH-stimulated lipid droplet fusion. May play an important role in energy homeostasis. May play a role in the response of the organism to starvation, enhancing hydrolysis of triglycerides and providing free fatty acids to other tissues to be oxidized in situations of energy depletion. The chain is Patatin-like phospholipase domain-containing protein 2 from Rattus norvegicus (Rat).